The following is a 362-amino-acid chain: tRNA-specific 2-thiouridylase MnmA 3 (362 aa).

ATP-binding positions include Gly11–Ser18 and Met37. Residue Cys91 is the Nucleophile of the active site. Cysteines 91 and 188 form a disulfide. Gly115 is a binding site for ATP. An interaction with tRNA region spans residues Lys137 to Gln139. Cys188 acts as the Cysteine persulfide intermediate in catalysis. Positions Arg296–Tyr297 are interaction with tRNA.

Belongs to the MnmA/TRMU family.

The protein localises to the cytoplasm. The catalysed reaction is S-sulfanyl-L-cysteinyl-[protein] + uridine(34) in tRNA + AH2 + ATP = 2-thiouridine(34) in tRNA + L-cysteinyl-[protein] + A + AMP + diphosphate + H(+). In terms of biological role, catalyzes the 2-thiolation of uridine at the wobble position (U34) of tRNA, leading to the formation of s(2)U34. This Bacteroides fragilis (strain YCH46) protein is tRNA-specific 2-thiouridylase MnmA 3.